A 97-amino-acid polypeptide reads, in one-letter code: DNA-binding protein NEQ150 (97 aa).

Belongs to the PDCD5 family.

This Nanoarchaeum equitans (strain Kin4-M) protein is DNA-binding protein NEQ150.